The sequence spans 896 residues: Sodium/hydrogen exchanger 5 (896 aa).

The Cytoplasmic segment spans residues Met-1 to Glu-45. Residues Ala-46–Leu-66 traverse the membrane as a helical segment. Topologically, residues Ser-67–Leu-73 are extracellular. Residues Val-74 to Val-94 form a helical membrane-spanning segment. At Ala-95–Glu-103 the chain is on the cytoplasmic side. A helical transmembrane segment spans residues Pro-104–Pro-124. Topologically, residues Ser-125 to Ala-134 are extracellular. Residues Ile-135–Trp-155 traverse the membrane as a helical segment. At Gly-156–Asp-173 the chain is on the cytoplasmic side. A helical transmembrane segment spans residues Phe-174–Glu-194. At Glu-195 to Glu-200 the chain is on the extracellular side. Asn-199 carries an N-linked (GlcNAc...) asparagine glycan. A helical transmembrane segment spans residues Thr-201 to Tyr-221. Residues Lys-222–Ser-246 are Cytoplasmic-facing. The helical transmembrane segment at Leu-247–Leu-267 threads the bilayer. Topologically, residues Thr-268 to Arg-276 are extracellular. A helical membrane pass occupies residues Ile-277 to Ala-297. Topologically, residues Ser-298–Thr-331 are cytoplasmic. The helical transmembrane segment at Met-332–Val-352 threads the bilayer. The Extracellular portion of the chain corresponds to Asp-353 to Asp-360. A helical membrane pass occupies residues Ser-361 to Leu-381. Residues Gln-382–Asp-398 are Cytoplasmic-facing. A helical transmembrane segment spans residues Gln-399–Leu-419. Over Asp-420–Asp-428 the chain is Extracellular. The helical transmembrane segment at Tyr-429–Ile-449 threads the bilayer. Topologically, residues Lys-450–Leu-896 are cytoplasmic. Positions Gly-576–Gly-721 are required for interaction with ARRB2. 3 disordered regions span residues Thr-658–Arg-686, Glu-701–Glu-720, and His-818–Glu-864. Positions Ser-660–Lys-672 are enriched in basic residues. Over residues Glu-854–Glu-864 the composition is skewed to polar residues.

It belongs to the monovalent cation:proton antiporter 1 (CPA1) transporter (TC 2.A.36) family. As to quaternary structure, interacts with CHP1 and CHP2. Interacts with ARRB2; facilitates the endocytosis of SLC9A5 from the plasma membrane. Interacts with RACK1; this interaction positively regulates SLC9A5 activity and promotes SLC9A5 localization to focal adhesions. Interacts with SCAMP2; this interaction regulates SLC9A5 cell-surface targeting and SLC9A5 activity. In terms of processing, phosphorylated by PRKAA2; promotes its accumulation at the cell surface. Phosphorylated by CSNK2A1 in a manner favoring its beta-arrestin binding and endocytosis. Mainly expressed in brain. Expressed in neurons of the central and peripheral nervous system. Expressed also in testis, spleen, and skeletal muscle.

Its subcellular location is the cell membrane. The protein resides in the recycling endosome membrane. It is found in the cell projection. It localises to the dendritic spine membrane. The protein localises to the synaptic cell membrane. Its subcellular location is the cell junction. The protein resides in the focal adhesion. It carries out the reaction Na(+)(in) + H(+)(out) = Na(+)(out) + H(+)(in). Its activity is regulated as follows. ATP-depletion almost completely abolishes SLC9A5 activity. Inhibited by amiloride compounds. Functionally, plasma membrane Na(+)/H(+) antiporter. Mediates the electroneutral exchange of intracellular H(+) ions for extracellular Na(+) in 1:1 stoichiometry, thus regulating intracellular pH homeostasis, in particular in neural tissues. Acts as a negative regulator of dendritic spine growth. Plays a role in postsynaptic remodeling and signaling. Can also contribute to organellar pH regulation, with consequences for receptor tyrosine kinase trafficking. The polypeptide is Sodium/hydrogen exchanger 5 (Homo sapiens (Human)).